We begin with the raw amino-acid sequence, 510 residues long: GMP synthase [glutamine-hydrolyzing] (510 aa).

The 191-residue stretch at 5–195 folds into the Glutamine amidotransferase type-1 domain; the sequence is MIVVLDFGSQ…VFEVCGCRGD (191 aa). The active-site Nucleophile is Cys82. Residues His169 and Glu171 contribute to the active site. Residues 196-385 enclose the GMPS ATP-PPase domain; it reads WTMENFIDEQ…LGIPDEIVWR (190 aa). 223–229 contacts ATP; sequence SGGVDSS.

Homodimer.

The enzyme catalyses XMP + L-glutamine + ATP + H2O = GMP + L-glutamate + AMP + diphosphate + 2 H(+). The protein operates within purine metabolism; GMP biosynthesis; GMP from XMP (L-Gln route): step 1/1. In terms of biological role, catalyzes the synthesis of GMP from XMP. The sequence is that of GMP synthase [glutamine-hydrolyzing] from Geobacillus kaustophilus (strain HTA426).